A 318-amino-acid chain; its full sequence is tRNA U34 carboxymethyltransferase (318 aa).

The carboxy-S-adenosyl-L-methionine site is built by Lys-88, Trp-102, Lys-107, Gly-126, Met-192, Tyr-196, and Arg-311.

Belongs to the class I-like SAM-binding methyltransferase superfamily. CmoB family. Homotetramer.

The enzyme catalyses carboxy-S-adenosyl-L-methionine + 5-hydroxyuridine(34) in tRNA = 5-carboxymethoxyuridine(34) in tRNA + S-adenosyl-L-homocysteine + H(+). Functionally, catalyzes carboxymethyl transfer from carboxy-S-adenosyl-L-methionine (Cx-SAM) to 5-hydroxyuridine (ho5U) to form 5-carboxymethoxyuridine (cmo5U) at position 34 in tRNAs. The chain is tRNA U34 carboxymethyltransferase from Pseudomonas fluorescens (strain ATCC BAA-477 / NRRL B-23932 / Pf-5).